The following is a 130-amino-acid chain: Small ribosomal subunit protein uS8 (130 aa).

It belongs to the universal ribosomal protein uS8 family. In terms of assembly, part of the 30S ribosomal subunit. Contacts proteins S5 and S12.

Functionally, one of the primary rRNA binding proteins, it binds directly to 16S rRNA central domain where it helps coordinate assembly of the platform of the 30S subunit. The chain is Small ribosomal subunit protein uS8 from Shewanella baltica (strain OS223).